The primary structure comprises 64 residues: Large ribosomal subunit protein bL35 (64 aa).

The segment at 20–42 (GRVKREKMYGSHNLEKKNRKRTR) is disordered. Residues 25-35 (EKMYGSHNLEK) show a composition bias toward basic and acidic residues.

It belongs to the bacterial ribosomal protein bL35 family.

This chain is Large ribosomal subunit protein bL35, found in Chlorobium phaeobacteroides (strain BS1).